The chain runs to 615 residues: 1-deoxy-D-xylulose-5-phosphate synthase (615 aa).

Thiamine diphosphate is bound by residues His-72 and 113-115; that span reads GHA. Asp-144 is a binding site for Mg(2+). Thiamine diphosphate-binding positions include 145–146, Asn-173, Tyr-281, and Glu-360; that span reads GA. Residue Asn-173 participates in Mg(2+) binding.

It belongs to the transketolase family. DXPS subfamily. Homodimer. The cofactor is Mg(2+). Thiamine diphosphate is required as a cofactor.

It catalyses the reaction D-glyceraldehyde 3-phosphate + pyruvate + H(+) = 1-deoxy-D-xylulose 5-phosphate + CO2. It functions in the pathway metabolic intermediate biosynthesis; 1-deoxy-D-xylulose 5-phosphate biosynthesis; 1-deoxy-D-xylulose 5-phosphate from D-glyceraldehyde 3-phosphate and pyruvate: step 1/1. In terms of biological role, catalyzes the acyloin condensation reaction between C atoms 2 and 3 of pyruvate and glyceraldehyde 3-phosphate to yield 1-deoxy-D-xylulose-5-phosphate (DXP). This chain is 1-deoxy-D-xylulose-5-phosphate synthase, found in Thermus thermophilus (strain ATCC BAA-163 / DSM 7039 / HB27).